We begin with the raw amino-acid sequence, 136 residues long: Transcription antitermination protein NusB (136 aa).

It belongs to the NusB family.

Involved in transcription antitermination. Required for transcription of ribosomal RNA (rRNA) genes. Binds specifically to the boxA antiterminator sequence of the ribosomal RNA (rrn) operons. The sequence is that of Transcription antitermination protein NusB from Salinispora tropica (strain ATCC BAA-916 / DSM 44818 / JCM 13857 / NBRC 105044 / CNB-440).